A 507-amino-acid chain; its full sequence is Anthranilate synthase component 1 (507 aa).

Ser-65 provides a ligand contact to L-tryptophan. Ser-81 bears the Phosphoserine mark. The residue at position 223 (Thr-223) is a Phosphothreonine. 280–282 (PYL) is a binding site for L-tryptophan. 316–317 (GT) provides a ligand contact to chorismate. Glu-343 lines the Mg(2+) pocket. Chorismate is bound by residues Tyr-431, Arg-452, 466-468 (GGG), and Gly-468. Residue Glu-481 participates in Mg(2+) binding.

This sequence belongs to the anthranilate synthase component I family. Tetramer of two components I and two components II. Mg(2+) is required as a cofactor.

It carries out the reaction chorismate + L-glutamine = anthranilate + pyruvate + L-glutamate + H(+). It functions in the pathway amino-acid biosynthesis; L-tryptophan biosynthesis; L-tryptophan from chorismate: step 1/5. The polypeptide is Anthranilate synthase component 1 (TRP2) (Saccharomyces cerevisiae (strain ATCC 204508 / S288c) (Baker's yeast)).